A 370-amino-acid chain; its full sequence is Histidinol-phosphate aminotransferase 2 (370 aa).

N6-(pyridoxal phosphate)lysine is present on lysine 230.

This sequence belongs to the class-II pyridoxal-phosphate-dependent aminotransferase family. Histidinol-phosphate aminotransferase subfamily. In terms of assembly, homodimer. Pyridoxal 5'-phosphate serves as cofactor.

It carries out the reaction L-histidinol phosphate + 2-oxoglutarate = 3-(imidazol-4-yl)-2-oxopropyl phosphate + L-glutamate. It functions in the pathway amino-acid biosynthesis; L-histidine biosynthesis; L-histidine from 5-phospho-alpha-D-ribose 1-diphosphate: step 7/9. The protein is Histidinol-phosphate aminotransferase 2 of Pseudomonas fluorescens (strain Pf0-1).